Consider the following 184-residue polypeptide: Photosystem I assembly protein Ycf4 (184 aa).

Transmembrane regions (helical) follow at residues 19-39 (ISNF…LLVG) and 57-77 (IIFF…LFIS).

The protein belongs to the Ycf4 family.

Its subcellular location is the plastid. The protein resides in the chloroplast thylakoid membrane. Functionally, seems to be required for the assembly of the photosystem I complex. The chain is Photosystem I assembly protein Ycf4 from Drimys granadensis.